Here is a 970-residue protein sequence, read N- to C-terminus: Protein translocase subunit SecA (970 aa).

ATP is bound by residues Gln-99, 117–121, and Asp-631; that span reads GEGKT.

This sequence belongs to the SecA family. As to quaternary structure, monomer and homodimer. Part of the essential Sec protein translocation apparatus which comprises SecA, SecYEG and auxiliary proteins SecDF. Other proteins may also be involved.

The protein localises to the cell inner membrane. It localises to the cytoplasm. The catalysed reaction is ATP + H2O + cellular proteinSide 1 = ADP + phosphate + cellular proteinSide 2.. Its function is as follows. Part of the Sec protein translocase complex. Interacts with the SecYEG preprotein conducting channel. Has a central role in coupling the hydrolysis of ATP to the transfer of proteins into and across the cell membrane, serving as an ATP-driven molecular motor driving the stepwise translocation of polypeptide chains across the membrane. This chain is Protein translocase subunit SecA, found in Chlamydia caviae (strain ATCC VR-813 / DSM 19441 / 03DC25 / GPIC) (Chlamydophila caviae).